The following is a 570-amino-acid chain: Small ribosomal subunit protein bS1 (570 aa).

S1 motif domains follow at residues 52 to 116 (GAIL…LSRE), 134 to 199 (GSIV…VSRR), 220 to 288 (GERR…LGLK), 305 to 375 (GKRV…LGLK), 392 to 462 (GLRV…LGVK), and 479 to 548 (GSDI…LSIK).

The protein belongs to the bacterial ribosomal protein bS1 family.

Its function is as follows. Binds mRNA; thus facilitating recognition of the initiation point. It is needed to translate mRNA with a short Shine-Dalgarno (SD) purine-rich sequence. In Chlamydia muridarum (strain MoPn / Nigg), this protein is Small ribosomal subunit protein bS1 (rpsA).